The primary structure comprises 55 residues: Large ribosomal subunit protein bL33 (55 aa).

The protein belongs to the bacterial ribosomal protein bL33 family.

The protein is Large ribosomal subunit protein bL33 of Sphingopyxis alaskensis (strain DSM 13593 / LMG 18877 / RB2256) (Sphingomonas alaskensis).